Consider the following 171-residue polypeptide: 3-hydroxydecanoyl-[acyl-carrier-protein] dehydratase (171 aa).

H70 is a catalytic residue.

It belongs to the thioester dehydratase family. FabA subfamily. In terms of assembly, homodimer.

The protein localises to the cytoplasm. The catalysed reaction is a (3R)-hydroxyacyl-[ACP] = a (2E)-enoyl-[ACP] + H2O. It catalyses the reaction (3R)-hydroxydecanoyl-[ACP] = (2E)-decenoyl-[ACP] + H2O. It carries out the reaction (2E)-decenoyl-[ACP] = (3Z)-decenoyl-[ACP]. It functions in the pathway lipid metabolism; fatty acid biosynthesis. Functionally, necessary for the introduction of cis unsaturation into fatty acids. Catalyzes the dehydration of (3R)-3-hydroxydecanoyl-ACP to E-(2)-decenoyl-ACP and then its isomerization to Z-(3)-decenoyl-ACP. Can catalyze the dehydratase reaction for beta-hydroxyacyl-ACPs with saturated chain lengths up to 16:0, being most active on intermediate chain length. This is 3-hydroxydecanoyl-[acyl-carrier-protein] dehydratase from Shewanella sp. (strain ANA-3).